A 120-amino-acid polypeptide reads, in one-letter code: Large ribosomal subunit protein bL19 (120 aa).

It belongs to the bacterial ribosomal protein bL19 family.

In terms of biological role, this protein is located at the 30S-50S ribosomal subunit interface and may play a role in the structure and function of the aminoacyl-tRNA binding site. The sequence is that of Large ribosomal subunit protein bL19 from Renibacterium salmoninarum (strain ATCC 33209 / DSM 20767 / JCM 11484 / NBRC 15589 / NCIMB 2235).